Consider the following 166-residue polypeptide: Large ribosomal subunit protein uL10 (166 aa).

This sequence belongs to the universal ribosomal protein uL10 family. As to quaternary structure, part of the ribosomal stalk of the 50S ribosomal subunit. The N-terminus interacts with L11 and the large rRNA to form the base of the stalk. The C-terminus forms an elongated spine to which L12 dimers bind in a sequential fashion forming a multimeric L10(L12)X complex.

Functionally, forms part of the ribosomal stalk, playing a central role in the interaction of the ribosome with GTP-bound translation factors. The sequence is that of Large ribosomal subunit protein uL10 from Ureaplasma parvum serovar 3 (strain ATCC 27815 / 27 / NCTC 11736).